The sequence spans 190 residues: dITP/XTP pyrophosphatase (190 aa).

Residue 10 to 15 (TTNKHK) participates in substrate binding. Glu39 and Asp68 together coordinate Mg(2+). Asp68 serves as the catalytic Proton acceptor. Residues Ala69, 143-146 (FGYD), Lys166, and 171-172 (HR) contribute to the substrate site.

It belongs to the HAM1 NTPase family. In terms of assembly, homodimer. Mg(2+) serves as cofactor.

The enzyme catalyses XTP + H2O = XMP + diphosphate + H(+). It catalyses the reaction dITP + H2O = dIMP + diphosphate + H(+). The catalysed reaction is ITP + H2O = IMP + diphosphate + H(+). In terms of biological role, pyrophosphatase that catalyzes the hydrolysis of nucleoside triphosphates to their monophosphate derivatives, with a high preference for the non-canonical purine nucleotides XTP (xanthosine triphosphate), dITP (deoxyinosine triphosphate) and ITP. Seems to function as a house-cleaning enzyme that removes non-canonical purine nucleotides from the nucleotide pool, thus preventing their incorporation into DNA/RNA and avoiding chromosomal lesions. This Hyperthermus butylicus (strain DSM 5456 / JCM 9403 / PLM1-5) protein is dITP/XTP pyrophosphatase.